The chain runs to 268 residues: Serine/arginine-rich splicing factor SR30 (268 aa).

RRM domains are found at residues 7–82 and 109–187; these read RTIY…IAHG and YRVL…EYES. The segment covering 186–199 has biased composition (basic and acidic residues); the sequence is ESRSVSRSPDDSKS. A disordered region spans residues 186 to 268; that stretch reads ESRSVSRSPD…NSPVSPVISG (83 aa). Ser193, Ser210, Ser212, Ser214, Ser219, Ser221, Ser227, Ser236, Ser246, Ser256, and Ser260 each carry phosphoserine. The segment covering 207-247 has biased composition (low complexity); that stretch reads RGPSCSYSSKSRSVSPARSISPRSRPLSRSRSLYSSVSRSQ. The span at 257-268 shows a compositional bias: low complexity; it reads RSNSPVSPVISG.

It belongs to the splicing factor SR family. SR subfamily. Component of the spliceosome. Interacts with SNRNP35, CYP59 and CYP63. In terms of processing, phosphorylated. As to expression, ubiquitous.

Its subcellular location is the nucleus speckle. It is found in the nucleus. It localises to the nucleoplasm. The protein localises to the cytoplasm. Functionally, regulatory splicing factor that modulates alternative splicing and gene expression in specific cell types. Autoregulates its own expression. Probably involved in intron recognition and spliceosome assembly. The polypeptide is Serine/arginine-rich splicing factor SR30 (SR30) (Arabidopsis thaliana (Mouse-ear cress)).